A 95-amino-acid chain; its full sequence is Signal recognition particle 19 kDa protein (95 aa).

The protein belongs to the SRP19 family. In terms of assembly, part of the signal recognition particle protein translocation system, which is composed of SRP and FtsY. Archaeal SRP consists of a 7S RNA molecule of 300 nucleotides and two protein subunits: SRP54 and SRP19.

It localises to the cytoplasm. Functionally, involved in targeting and insertion of nascent membrane proteins into the cytoplasmic membrane. Binds directly to 7S RNA and mediates binding of the 54 kDa subunit of the SRP. In Methanococcoides burtonii (strain DSM 6242 / NBRC 107633 / OCM 468 / ACE-M), this protein is Signal recognition particle 19 kDa protein.